Reading from the N-terminus, the 1020-residue chain is Mediator of RNA polymerase II transcription subunit 16 (1020 aa).

The protein belongs to the Mediator complex subunit 16 family. In terms of assembly, component of the Mediator complex.

The protein localises to the nucleus. Component of the Mediator complex, a coactivator involved in the regulated transcription of nearly all RNA polymerase II-dependent genes. Mediator functions as a bridge to convey information from gene-specific regulatory proteins to the basal RNA polymerase II transcription machinery. Mediator is recruited to promoters by direct interactions with regulatory proteins and serves as a scaffold for the assembly of a functional preinitiation complex with RNA polymerase II and the general transcription factors. The sequence is that of Mediator of RNA polymerase II transcription subunit 16 (SIN4) from Scheffersomyces stipitis (strain ATCC 58785 / CBS 6054 / NBRC 10063 / NRRL Y-11545) (Yeast).